The chain runs to 428 residues: GTPase Obg (428 aa).

Residues M1–L158 enclose the Obg domain. The region spanning A159–K331 is the OBG-type G domain. GTP contacts are provided by residues G165–S172, F190–K194, D212–G215, N282–D285, and S312–A314. Mg(2+)-binding residues include S172 and T192. The OCT domain occupies M345–L428.

Belongs to the TRAFAC class OBG-HflX-like GTPase superfamily. OBG GTPase family. Monomer. Requires Mg(2+) as cofactor.

The protein resides in the cytoplasm. Its function is as follows. An essential GTPase which binds GTP, GDP and possibly (p)ppGpp with moderate affinity, with high nucleotide exchange rates and a fairly low GTP hydrolysis rate. Plays a role in control of the cell cycle, stress response, ribosome biogenesis and in those bacteria that undergo differentiation, in morphogenesis control. This Clostridium botulinum (strain Alaska E43 / Type E3) protein is GTPase Obg.